A 265-amino-acid polypeptide reads, in one-letter code: Capsule polysaccharide export inner-membrane protein CtrC (265 aa).

6 consecutive transmembrane segments (helical) span residues 37-57, 64-84, 121-141, 147-167, 178-198, and 236-256; these read IGFL…VLMW, NVSA…MMMW, IAGA…IGWI, IFYM…LGLV, FGKV…VFFF, and NPWY…AVVA. Positions 37–258 constitute an ABC transmembrane type-2 domain; it reads IGFLWLFVEP…LLGLAVVARF (222 aa).

The protein belongs to the ABC-2 integral membrane protein family.

It localises to the cell inner membrane. Its function is as follows. May form an ATP-driven capsule polysaccharide export apparatus, in association with the CtrB and CtrD proteins. The chain is Capsule polysaccharide export inner-membrane protein CtrC (ctrC) from Neisseria meningitidis serogroup A / serotype 4A (strain DSM 15465 / Z2491).